We begin with the raw amino-acid sequence, 307 residues long: Taste receptor type 2 member 41 (307 aa).

Topologically, residues 1-7 are extracellular; that stretch reads MQAALTA. Residues 8–28 form a helical membrane-spanning segment; that stretch reads FFMLLFSLLSLLGIAANGFIV. Over 29–40 the chain is Cytoplasmic; it reads LVLGREWLRYGR. The helical transmembrane segment at 41-61 threads the bilayer; sequence LLPLDMILISLGASRFCLQLV. Residues 62–88 lie on the Extracellular side of the membrane; that stretch reads GTVHNFYYSAQKVEYSGGLGRQFFHLH. Residues 89-109 form a helical membrane-spanning segment; sequence WHFLNSATFWFCSWLSVLFCV. At 110-129 the chain is on the cytoplasmic side; it reads KIANITHPTFLWLKWRFPAW. Residues 130–150 traverse the membrane as a helical segment; that stretch reads VPWLLLGSVLISFIITLLFFW. The Extracellular portion of the chain corresponds to 151-183; it reads VNYPAYQEFLIRKFSVNMTYKWNTRIETYYFPS. Residue Asn-167 is glycosylated (N-linked (GlcNAc...) asparagine). The chain crosses the membrane as a helical span at residues 184 to 204; that stretch reads LKLVIWSIPFSVFLVSIMLLI. Over 205 to 234 the chain is Cytoplasmic; it reads NSLRRHTQRMQHNGHSLQDPSTQAHTRALK. The chain crosses the membrane as a helical span at residues 235–255; sequence SLISFLILYALSFLSLIIDAT. Topologically, residues 256 to 264 are extracellular; the sequence is KFISMQNDF. A helical membrane pass occupies residues 265 to 285; that stretch reads YWPWQIAVYLCISIHPFILIF. At 286–307 the chain is on the cytoplasmic side; the sequence is SNLKLRSVFSQLLLLARGFWVA.

This sequence belongs to the G-protein coupled receptor T2R family.

The protein resides in the membrane. Receptor that may play a role in the perception of bitterness and is gustducin-linked. May play a role in sensing the chemical composition of the gastrointestinal content. The activity of this receptor may stimulate alpha gustducin, mediate PLC-beta-2 activation and lead to the gating of TRPM5. In Pan paniscus (Pygmy chimpanzee), this protein is Taste receptor type 2 member 41 (TAS2R41).